The following is a 114-amino-acid chain: Small ribosomal subunit protein bS16 (114 aa).

It belongs to the bacterial ribosomal protein bS16 family.

The polypeptide is Small ribosomal subunit protein bS16 (Prochlorococcus marinus subsp. pastoris (strain CCMP1986 / NIES-2087 / MED4)).